The chain runs to 468 residues: UDP-N-acetylmuramate--L-alanine ligase (468 aa).

117–123 (GTHGKTT) is a binding site for ATP.

Belongs to the MurCDEF family.

Its subcellular location is the cytoplasm. It carries out the reaction UDP-N-acetyl-alpha-D-muramate + L-alanine + ATP = UDP-N-acetyl-alpha-D-muramoyl-L-alanine + ADP + phosphate + H(+). It participates in cell wall biogenesis; peptidoglycan biosynthesis. Its function is as follows. Cell wall formation. The chain is UDP-N-acetylmuramate--L-alanine ligase from Maricaulis maris (strain MCS10) (Caulobacter maris).